A 144-amino-acid chain; its full sequence is MQCGGWMHEEHTADVLVIAYGRTLEEAFENAARGVYEVVTDTSRVEPRRRVDASIEGIDLENLLYRFIENLIAYTDSEGLVFGLFRVCKIECNGESCSIVASAWGEEFDPSRHEHRTIVKAMTYADMEIKEENGCWRVQFVVDI.

Positions 14, 143, and 144 each coordinate Ca(2+).

It belongs to the archease family.

Functionally, activates the tRNA-splicing ligase complex by facilitating the enzymatic turnover of catalytic subunit RtcB. Acts by promoting the guanylylation of RtcB, a key intermediate step in tRNA ligation. Can also alter the NTP specificity of RtcB such that ATP, dGTP or ITP is used efficiently. In Aeropyrum pernix (strain ATCC 700893 / DSM 11879 / JCM 9820 / NBRC 100138 / K1), this protein is Protein archease.